We begin with the raw amino-acid sequence, 37 residues long: Large ribosomal subunit protein bL36 (37 aa).

This sequence belongs to the bacterial ribosomal protein bL36 family.

This Clostridioides difficile (strain 630) (Peptoclostridium difficile) protein is Large ribosomal subunit protein bL36.